The primary structure comprises 295 residues: GTPase Era (295 aa).

An Era-type G domain is found at 3-170 (KSGFVTIVGR…VDLMKTELPE (168 aa)). The interval 11-18 (GRPNVGKS) is G1. Position 11–18 (11–18 (GRPNVGKS)) interacts with GTP. The segment at 37 to 41 (QTTRN) is G2. The tract at residues 58-61 (DTPG) is G3. GTP-binding positions include 58-62 (DTPGI) and 120-123 (NKID). The tract at residues 120 to 123 (NKID) is G4. A G5 region spans residues 149–151 (IAA). In terms of domain architecture, KH type-2 spans 201 to 278 (LRDEVPHGIA…NVKIWVKVRK (78 aa)).

The protein belongs to the TRAFAC class TrmE-Era-EngA-EngB-Septin-like GTPase superfamily. Era GTPase family. As to quaternary structure, monomer.

It is found in the cytoplasm. It localises to the cell membrane. Its function is as follows. An essential GTPase that binds both GDP and GTP, with rapid nucleotide exchange. Plays a role in 16S rRNA processing and 30S ribosomal subunit biogenesis and possibly also in cell cycle regulation and energy metabolism. The polypeptide is GTPase Era (Clostridium botulinum (strain Alaska E43 / Type E3)).